The chain runs to 182 residues: MIELTALAIALSMDAVAVSIALGSKCEEEIRQLALKAGGFFGVAQMVMPLLGFYLGVQLHDYIGGIHHWVALGVLGFLGLKMIREATQGEKELALSSHPSSSKLLLLAFVTSLDAMAAGLTLTLLGLPLWFCLLFIGGSTFLLSFGGVHLGRKSGTYLEEKAEYLGGIILILIGVKIFIEHS.

6 consecutive transmembrane segments (helical) span residues 2–22 (IELT…SIAL), 37–57 (AGGF…YLGV), 63–83 (IGGI…LKMI), 104–123 (LLLL…LTLT), 127–149 (LPLW…GGVH), and 162–182 (AEYL…IEHS).

Belongs to the MntP (TC 9.B.29) family.

It localises to the cell inner membrane. Its function is as follows. Probably functions as a manganese efflux pump. The sequence is that of Putative manganese efflux pump MntP 2 from Wolinella succinogenes (strain ATCC 29543 / DSM 1740 / CCUG 13145 / JCM 31913 / LMG 7466 / NCTC 11488 / FDC 602W) (Vibrio succinogenes).